A 413-amino-acid polypeptide reads, in one-letter code: Multifunctional CCA protein (413 aa).

ATP contacts are provided by Gly8 and Arg11. Residues Gly8 and Arg11 each coordinate CTP. The Mg(2+) site is built by Asp21 and Asp23. Residues Arg91, Arg137, and Arg140 each coordinate ATP. The CTP site is built by Arg91, Arg137, and Arg140. The HD domain maps to 228-329 (TGLHTLMTVT…VKLFDSIDAW (102 aa)).

It belongs to the tRNA nucleotidyltransferase/poly(A) polymerase family. Bacterial CCA-adding enzyme type 1 subfamily. As to quaternary structure, monomer. Can also form homodimers and oligomers. Requires Mg(2+) as cofactor. The cofactor is Ni(2+).

It carries out the reaction a tRNA precursor + 2 CTP + ATP = a tRNA with a 3' CCA end + 3 diphosphate. It catalyses the reaction a tRNA with a 3' CCA end + 2 CTP + ATP = a tRNA with a 3' CCACCA end + 3 diphosphate. Its function is as follows. Catalyzes the addition and repair of the essential 3'-terminal CCA sequence in tRNAs without using a nucleic acid template. Adds these three nucleotides in the order of C, C, and A to the tRNA nucleotide-73, using CTP and ATP as substrates and producing inorganic pyrophosphate. tRNA 3'-terminal CCA addition is required both for tRNA processing and repair. Also involved in tRNA surveillance by mediating tandem CCA addition to generate a CCACCA at the 3' terminus of unstable tRNAs. While stable tRNAs receive only 3'-terminal CCA, unstable tRNAs are marked with CCACCA and rapidly degraded. In Klebsiella pneumoniae (strain 342), this protein is Multifunctional CCA protein.